The chain runs to 366 residues: RNA 3'-terminal phosphate cyclase (366 aa).

ATP-binding residues include Gln104, Pro131, Tyr294, Asp297, Gln298, and His320. His320 functions as the Tele-AMP-histidine intermediate in the catalytic mechanism.

Belongs to the RNA 3'-terminal cyclase family. Type 1 subfamily.

It is found in the nucleus. The protein localises to the nucleoplasm. The catalysed reaction is a 3'-end 3'-phospho-ribonucleotide-RNA + ATP = a 3'-end 2',3'-cyclophospho-ribonucleotide-RNA + AMP + diphosphate. Functionally, catalyzes the conversion of 3'-phosphate to a 2',3'-cyclic phosphodiester at the end of RNA. The mechanism of action of the enzyme occurs in 3 steps: (A) adenylation of the enzyme by ATP; (B) transfer of adenylate to an RNA-N3'P to produce RNA-N3'PP5'A; (C) and attack of the adjacent 2'-hydroxyl on the 3'-phosphorus in the diester linkage to produce the cyclic end product. Likely functions in some aspects of cellular RNA processing. Function plays an important role in regulating axon regeneration by inhibiting central nervous system (CNS) axon regeneration following optic nerve injury. This chain is RNA 3'-terminal phosphate cyclase (RTCA), found in Bos taurus (Bovine).